The sequence spans 159 residues: Ribosomal RNA large subunit methyltransferase H (159 aa).

S-adenosyl-L-methionine is bound by residues Leu-76, Gly-108, and 127–132 (FGLLTL).

It belongs to the RNA methyltransferase RlmH family. In terms of assembly, homodimer.

It localises to the cytoplasm. It catalyses the reaction pseudouridine(1915) in 23S rRNA + S-adenosyl-L-methionine = N(3)-methylpseudouridine(1915) in 23S rRNA + S-adenosyl-L-homocysteine + H(+). Its function is as follows. Specifically methylates the pseudouridine at position 1915 (m3Psi1915) in 23S rRNA. The chain is Ribosomal RNA large subunit methyltransferase H from Streptococcus pyogenes serotype M12 (strain MGAS2096).